Consider the following 350-residue polypeptide: uncharacterized protein (350 aa).

3 helical membrane-spanning segments follow: residues 10 to 30 (YSFILCLAVGSVTIYTSEVIG), 51 to 71 (FAGILFTALVQLFSPTPVTLT), and 327 to 347 (ILSLFSVLFTCIVAGLFLKLF).

This sequence belongs to the 1-acyl-sn-glycerol-3-phosphate acyltransferase family.

It localises to the endoplasmic reticulum membrane. This is an uncharacterized protein from Schizosaccharomyces pombe (strain 972 / ATCC 24843) (Fission yeast).